The following is a 246-amino-acid chain: Serine protease 1 (246 aa).

The first 15 residues, 1–15 (MSALLILALVGAAVA), serve as a signal peptide directing secretion. Residues 16–23 (FPLEDDDK) constitute a propeptide, activation peptide. Residues 24-244 (IVGGYTCPEH…FVGWIQDTIA (221 aa)) enclose the Peptidase S1 domain. 6 disulfides stabilise this stretch: Cys-30/Cys-160, Cys-48/Cys-64, Cys-132/Cys-233, Cys-139/Cys-206, Cys-171/Cys-185, and Cys-196/Cys-220. His-63 serves as the catalytic Charge relay system. Ca(2+)-binding residues include Glu-75, Asn-77, Val-80, and Glu-85. The Charge relay system role is filled by Asp-107. The Charge relay system role is filled by Ser-200.

It belongs to the peptidase S1 family. As to quaternary structure, interacts with SERPINA1. The cofactor is Ca(2+).

It is found in the secreted. The protein resides in the extracellular space. It catalyses the reaction Preferential cleavage: Arg-|-Xaa, Lys-|-Xaa.. The sequence is that of Serine protease 1 from Rattus norvegicus (Rat).